Reading from the N-terminus, the 837-residue chain is Tuftelin-interacting protein 11 (837 aa).

Composition is skewed to basic and acidic residues over residues 1–13 (MSLS…GEGR) and 53–64 (VWAERDSDDERP). Disordered stretches follow at residues 1–21 (MSLS…DDER), 53–72 (VWAE…KRAR), and 85–133 (LKKG…KGFA). Residues 1-50 (MSLSHLYRDGEGRIDDDDDERENFEITDWDLQNEFNPNRQRHWQTKEEAT) are required for interaction with DHX15. 3 positions are modified to phosphoserine: Ser-2, Ser-59, and Ser-98. Positions 91 to 102 (EEAELEDSDDEE) are enriched in acidic residues. Residues 103-116 (KPVKQDDFPKDFGP) show a composition bias toward basic and acidic residues. Residue Ser-144 is modified to Phosphoserine. A G-patch domain is found at 149–195 (TKGIGQKLLQKMGYVPGRGLGKNAQGIINPIEAKQRKGKGAVGAYGS). The interval 179–236 (IEAKQRKGKGAVGAYGSERTTQSMQDFPVVDSEEEAEEEFQKELSQWRKDPSGSKKKP) is disordered. Ser-210 bears the Phosphoserine mark. Residues 217–231 (EFQKELSQWRKDPSG) are compositionally biased toward basic and acidic residues. Positions 700 to 705 (VKDKFN) match the Nuclear localization signal motif. The required for nuclear speckle localization stretch occupies residues 710 to 734 (IMNRAVSSNVGAYMQPGARENIAYL).

Belongs to the TFP11/STIP family. Identified in the spliceosome C complex. Found in the Intron Large (IL) complex, a post-mRNA release spliceosomal complex containing the excised intron, U2, U5 and U6 snRNPs, and splicing factors. Interacts with TUFT1. Interacts with DHX15; indicative for a recruitment of DHX15 to the IL complex. Interacts with GCFC2.

It localises to the cytoplasm. It is found in the nucleus. Functionally, involved in pre-mRNA splicing, specifically in spliceosome disassembly during late-stage splicing events. Intron turnover seems to proceed through reactions in two lariat-intron associated complexes termed Intron Large (IL) and Intron Small (IS). In cooperation with DHX15 seems to mediate the transition of the U2, U5 and U6 snRNP-containing IL complex to the snRNP-free IS complex leading to efficient debranching and turnover of excised introns. May play a role in the differentiation of ameloblasts and odontoblasts or in the forming of the enamel extracellular matrix. The chain is Tuftelin-interacting protein 11 (TFIP11) from Homo sapiens (Human).